Here is a 968-residue protein sequence, read N- to C-terminus: Translation initiation factor IF-2 (968 aa).

Over residues 51–76 (PAAGASKSEAPAAAPKAPASPAATRP) the composition is skewed to low complexity. The interval 51 to 369 (PAAGASKSEA…GVSVPRGDGN (319 aa)) is disordered. Positions 77-87 (APAPGPAAPKA) are enriched in pro residues. Low complexity predominate over residues 93–102 (EAPAAASAPS). Residues 103-112 (APAPAAPAPA) are compositionally biased toward pro residues. 3 stretches are compositionally biased toward low complexity: residues 113–122 (APAAAASAPS), 128–170 (APST…GNNP), and 239–254 (GARPGAPRPAGAPGAR). The span at 281 to 336 (GRPGGGGRGPGRPGGAPGTGGAPGAGGGAPAGGGFGKGGRGRGGTQGAFGKGGAGR) shows a compositional bias: gly residues. Basic residues predominate over residues 337–346 (GKQRKSKRAK). A tr-type G domain is found at 461 to 632 (ARPPVVTVMG…AVLLTADAAL (172 aa)). The interval 470–477 (GHVDHGKT) is G1. GTP is bound at residue 470–477 (GHVDHGKT). The interval 495–499 (GITQH) is G2. The tract at residues 520–523 (DTPG) is G3. GTP is bound by residues 520-524 (DTPGH) and 574-577 (NKID). The segment at 574–577 (NKID) is G4. A G5 region spans residues 610 to 612 (SAR).

It belongs to the TRAFAC class translation factor GTPase superfamily. Classic translation factor GTPase family. IF-2 subfamily.

Its subcellular location is the cytoplasm. One of the essential components for the initiation of protein synthesis. Protects formylmethionyl-tRNA from spontaneous hydrolysis and promotes its binding to the 30S ribosomal subunits. Also involved in the hydrolysis of GTP during the formation of the 70S ribosomal complex. The sequence is that of Translation initiation factor IF-2 from Arthrobacter sp. (strain FB24).